The following is a 319-amino-acid chain: HPr kinase/phosphorylase (319 aa).

Active-site residues include His-141 and Lys-162. Residue 156–163 (GNSGVGKS) coordinates ATP. Ser-163 provides a ligand contact to Mg(2+). The active-site Proton acceptor; for phosphorylation activity. Proton donor; for dephosphorylation activity is Asp-180. The important for the catalytic mechanism of both phosphorylation and dephosphorylation stretch occupies residues 204–213 (MEIRGIGIID). Glu-205 provides a ligand contact to Mg(2+). Arg-246 is a catalytic residue. Positions 267 to 272 (PVKVGR) are important for the catalytic mechanism of dephosphorylation.

The protein belongs to the HPrK/P family. In terms of assembly, homohexamer. It depends on Mg(2+) as a cofactor.

The enzyme catalyses [HPr protein]-L-serine + ATP = [HPr protein]-O-phospho-L-serine + ADP + H(+). It catalyses the reaction [HPr protein]-O-phospho-L-serine + phosphate + H(+) = [HPr protein]-L-serine + diphosphate. Catalyzes the ATP- as well as the pyrophosphate-dependent phosphorylation of a specific serine residue in HPr, a phosphocarrier protein of the phosphoenolpyruvate-dependent sugar phosphotransferase system (PTS). HprK/P also catalyzes the pyrophosphate-producing, inorganic phosphate-dependent dephosphorylation (phosphorolysis) of seryl-phosphorylated HPr (P-Ser-HPr). The two antagonistic activities of HprK/P are regulated by several intracellular metabolites, which change their concentration in response to the absence or presence of rapidly metabolisable carbon sources (glucose, fructose, etc.) in the growth medium. Therefore, by controlling the phosphorylation state of HPr, HPrK/P is a sensor enzyme that plays a major role in the regulation of carbon metabolism and sugar transport: it mediates carbon catabolite repression (CCR), and regulates PTS-catalyzed carbohydrate uptake and inducer exclusion. The protein is HPr kinase/phosphorylase of Lactobacillus gasseri (strain ATCC 33323 / DSM 20243 / BCRC 14619 / CIP 102991 / JCM 1131 / KCTC 3163 / NCIMB 11718 / NCTC 13722 / AM63).